The chain runs to 433 residues: 3-phosphoshikimate 1-carboxyvinyltransferase (433 aa).

Residues Lys-23, Ser-24, and Arg-28 each coordinate 3-phosphoshikimate. Lys-23 contributes to the phosphoenolpyruvate binding site. Residues Gly-95 and Arg-123 each coordinate phosphoenolpyruvate. 3-phosphoshikimate contacts are provided by Ser-170, Ser-171, Gln-172, Ser-198, Asp-317, and Lys-344. Position 172 (Gln-172) interacts with phosphoenolpyruvate. Residue Asp-317 is the Proton acceptor of the active site. Phosphoenolpyruvate contacts are provided by Arg-348, Arg-391, and Lys-416.

The protein belongs to the EPSP synthase family. In terms of assembly, monomer.

The protein localises to the cytoplasm. The catalysed reaction is 3-phosphoshikimate + phosphoenolpyruvate = 5-O-(1-carboxyvinyl)-3-phosphoshikimate + phosphate. It participates in metabolic intermediate biosynthesis; chorismate biosynthesis; chorismate from D-erythrose 4-phosphate and phosphoenolpyruvate: step 6/7. Catalyzes the transfer of the enolpyruvyl moiety of phosphoenolpyruvate (PEP) to the 5-hydroxyl of shikimate-3-phosphate (S3P) to produce enolpyruvyl shikimate-3-phosphate and inorganic phosphate. The protein is 3-phosphoshikimate 1-carboxyvinyltransferase of Neisseria meningitidis serogroup C / serotype 2a (strain ATCC 700532 / DSM 15464 / FAM18).